The sequence spans 414 residues: Snake venom metalloproteinase atrolysin-B (414 aa).

A signal peptide spans 1 to 20 (MIEVLLVTICLAVFPYQGSS). Positions 21 to 190 (IILESGNVND…KASDLNLNPD (170 aa)) are excised as a propeptide. At glutamine 191 the chain carries Pyrrolidone carboxylic acid. One can recognise a Peptidase M12B domain in the interval 197–393 (RYIELVVVAD…YKPQCILNKP (197 aa)). Ca(2+) contacts are provided by glutamate 200 and aspartate 284. 2 disulfides stabilise this stretch: cysteine 308–cysteine 388 and cysteine 348–cysteine 355. Histidine 333 is a binding site for Zn(2+). The active site involves glutamate 334. Residues histidine 337 and histidine 343 each coordinate Zn(2+). The Ca(2+) site is built by cysteine 388, asparagine 391, valine 403, asparagine 406, leucine 408, glutamate 410, and glutamate 413. Positions 394-414 (LRIDPVSTPVSGNELLEAGEE) are excised as a propeptide.

Belongs to the venom metalloproteinase (M12B) family. P-I subfamily. Monomer. Requires Zn(2+) as cofactor. The N-terminus is blocked. As to expression, expressed by the venom gland.

It localises to the secreted. The catalysed reaction is Cleavage of 5-His-|-Leu-6, 10-His-|-Leu-11, 14-Ala-|-Leu-15, 16-Tyr-|-Leu-17 and 23-Gly-|-Phe-24 of insulin B chain. Identical to the cleavage of insulin B chain by atrolysin C. Also cleaves Xaa-|-Ser bonds in glucagon.. Functionally, snake venom metalloproteinase that impairs hemostasis in the envenomed animal. The chain is Snake venom metalloproteinase atrolysin-B from Crotalus atrox (Western diamondback rattlesnake).